The primary structure comprises 20 residues: Transcriptional regulatory protein PufK (20 aa).

The segment covering 1–11 (MVPYRNPRHQH) has biased composition (basic residues). Residues 1 to 20 (MVPYRNPRHQHVASVLRSGG) are disordered.

In terms of biological role, involved in the transcriptional regulation of pufB. In Cereibacter sphaeroides (strain ATCC 17023 / DSM 158 / JCM 6121 / CCUG 31486 / LMG 2827 / NBRC 12203 / NCIMB 8253 / ATH 2.4.1.) (Rhodobacter sphaeroides), this protein is Transcriptional regulatory protein PufK (pufK).